A 525-amino-acid polypeptide reads, in one-letter code: Serine/threonine protein phosphatase 2A 55 kDa regulatory subunit B beta isoform (525 aa).

The tract at residues 1-31 (MDPFSKSPDDDDLRPEAEAARRPQPQPQPRE) is disordered. WD repeat units follow at residues 48–87 (QEVDIISAIEFDKSGDHLATGDRGGRVVLFERTDSRDSAS) and 124–165 (EIEE…VKRI). Positions 169 to 191 (NLNTSQSSGNGTTSSSSSSSSRA) are disordered. Positions 171–189 (NTSQSSGNGTTSSSSSSSS) are enriched in low complexity. WD repeat units follow at residues 244–282 (AHDYHINSISNNSDGETYISADDLRINLWNLEISNQSFN), 293–333 (DLTE…LCDN), 352–390 (EIIASVSDIKFARDGRHILSRDYMTLKLWDINMDSGPVA), and 495–525 (DLSTKLLHLAWHPTENSIACAAANSLYMYYA).

Belongs to the phosphatase 2A regulatory subunit B family. PP2A consists of a common heteromeric enzyme, composed of a catalytic subunit (subunits C), a constant regulatory subunit (subunit A), and a variety of regulatory subunits such as subunits B (the R2/B/PR55/B55, R3/B''/PR72/PR130/PR59 and R5/B'/B56 families).

In terms of biological role, the B regulatory subunit may modulate substrate selectivity and catalytic activity, and may also direct the localization of the catalytic enzyme to a particular subcellular compartment. The sequence is that of Serine/threonine protein phosphatase 2A 55 kDa regulatory subunit B beta isoform from Oryza sativa subsp. indica (Rice).